Reading from the N-terminus, the 948-residue chain is Isoleucine--tRNA ligase (948 aa).

Residues 58–68 carry the 'HIGH' region motif; the sequence is PYANGDIHIGH. An L-isoleucyl-5'-AMP-binding site is contributed by Glu-566. The 'KMSKS' region motif lies at 607–611; it reads KMSKS. Lys-610 is an ATP binding site. Zn(2+)-binding residues include Cys-911, Cys-914, Cys-931, and Cys-934.

This sequence belongs to the class-I aminoacyl-tRNA synthetase family. IleS type 1 subfamily. In terms of assembly, monomer. Requires Zn(2+) as cofactor.

The protein resides in the cytoplasm. It carries out the reaction tRNA(Ile) + L-isoleucine + ATP = L-isoleucyl-tRNA(Ile) + AMP + diphosphate. Its function is as follows. Catalyzes the attachment of isoleucine to tRNA(Ile). As IleRS can inadvertently accommodate and process structurally similar amino acids such as valine, to avoid such errors it has two additional distinct tRNA(Ile)-dependent editing activities. One activity is designated as 'pretransfer' editing and involves the hydrolysis of activated Val-AMP. The other activity is designated 'posttransfer' editing and involves deacylation of mischarged Val-tRNA(Ile). The chain is Isoleucine--tRNA ligase from Vibrio vulnificus (strain CMCP6).